Consider the following 484-residue polypeptide: Serine hydroxymethyltransferase, cytosolic (484 aa).

Ala2 carries the post-translational modification N-acetylalanine. Residue Asn6 is modified to Deamidated asparagine; alternate. The isoaspartyl glycine isopeptide (Asn-Gly); alternate cross-link spans Asn6–Gly7. Residue Cys204 is the Nucleophile of the active site. Residue His256 is the Proton donor of the active site. Residue Lys257 is modified to N6-(pyridoxal phosphate)lysine.

The protein belongs to the SHMT family. Homotetramer. Identified in complex with ABRAXAS2 and the other subunits of the BRISC complex, at least composed of ABRAXAS2, BRCC3/BRCC36, BABAM2 and BABAM1/NBA1. Requires pyridoxal 5'-phosphate as cofactor. In terms of processing, deamidation of asparagine produces alternatively aspartate or isoaspartate, which in turn can be converted to aspartate through carboxylmethylation/demethylation.

The protein localises to the cytoplasm. The catalysed reaction is (6R)-5,10-methylene-5,6,7,8-tetrahydrofolate + glycine + H2O = (6S)-5,6,7,8-tetrahydrofolate + L-serine. It participates in one-carbon metabolism; tetrahydrofolate interconversion. Interconversion of serine and glycine. The chain is Serine hydroxymethyltransferase, cytosolic (SHMT1) from Oryctolagus cuniculus (Rabbit).